A 146-amino-acid chain; its full sequence is Catabolic 3-dehydroquinase (146 aa).

The active-site Proton acceptor is the Tyr24. Positions 78, 84, and 91 each coordinate substrate. Residue His104 is the Proton donor of the active site. Residues 105–106 and Arg115 each bind substrate; that span reads IT.

This sequence belongs to the type-II 3-dehydroquinase family. As to quaternary structure, homododecamer. Adopts a ring-like structure, composed of an arrangement of two hexameric rings stacked on top of one another.

It catalyses the reaction 3-dehydroquinate = 3-dehydroshikimate + H2O. It participates in aromatic compound metabolism; 3,4-dihydroxybenzoate biosynthesis; 3,4-dihydroxybenzoate from 3-dehydroquinate: step 1/2. Functionally, is involved in the catabolism of quinate. Allows the utilization of quinate as carbon source via the beta-ketoadipate pathway. In Meyerozyma guilliermondii (strain ATCC 6260 / CBS 566 / DSM 6381 / JCM 1539 / NBRC 10279 / NRRL Y-324) (Yeast), this protein is Catabolic 3-dehydroquinase.